Reading from the N-terminus, the 476-residue chain is Glycogen synthase (476 aa).

Residue Lys15 coordinates ADP-alpha-D-glucose.

The protein belongs to the glycosyltransferase 1 family. Bacterial/plant glycogen synthase subfamily.

The catalysed reaction is [(1-&gt;4)-alpha-D-glucosyl](n) + ADP-alpha-D-glucose = [(1-&gt;4)-alpha-D-glucosyl](n+1) + ADP + H(+). The protein operates within glycan biosynthesis; glycogen biosynthesis. Its function is as follows. Synthesizes alpha-1,4-glucan chains using ADP-glucose. The protein is Glycogen synthase of Haemophilus influenzae (strain PittGG).